The following is a 733-amino-acid chain: Hexamerin (733 aa).

Residues 1 to 17 form the signal peptide; the sequence is MKTALVLILATATLAVA. Residues Asn199, Asn234, and Asn431 are each glycosylated (N-linked (GlcNAc...) asparagine).

It belongs to the hemocyanin family. In terms of assembly, homohexamer.

It localises to the secreted. The protein resides in the extracellular space. Larval storage protein (LSP) which may serve as a store of amino acids for synthesis of adult proteins. This chain is Hexamerin, found in Blaberus discoidalis (Tropical cockroach).